The following is a 263-amino-acid chain: uncharacterized protein (263 aa).

Residues Thr-6–Lys-121 form the Response regulatory domain. Asp-58 is subject to 4-aspartylphosphate. Positions Ile-158 to Met-263 constitute an HTH LytTR-type domain.

This is an uncharacterized protein from Vibrio parahaemolyticus serotype O3:K6 (strain RIMD 2210633).